The primary structure comprises 311 residues: Probable cobalamin biosynthesis protein CobD (311 aa).

4 helical membrane-spanning segments follow: residues 53 to 73, 76 to 96, 157 to 177, and 288 to 308; these read FIFG…AIYG, ILIN…FLIS, DSII…AFIY, and FSID…YVIF.

This sequence belongs to the CobD/CbiB family.

The protein localises to the cell membrane. It participates in cofactor biosynthesis; adenosylcobalamin biosynthesis. Its function is as follows. Converts cobyric acid to cobinamide by the addition of aminopropanol on the F carboxylic group. This chain is Probable cobalamin biosynthesis protein CobD, found in Methanococcus aeolicus (strain ATCC BAA-1280 / DSM 17508 / OCM 812 / Nankai-3).